We begin with the raw amino-acid sequence, 206 residues long: Small ribosomal subunit protein uS4 (206 aa).

Residues 27-47 are disordered; it reads PSESKCNMNAAPGQHGGRRGR. The region spanning 96–158 is the S4 RNA-binding domain; sequence QRLDNVVYRM…SRKQIRIQSA (63 aa).

It belongs to the universal ribosomal protein uS4 family. In terms of assembly, part of the 30S ribosomal subunit. Contacts protein S5. The interaction surface between S4 and S5 is involved in control of translational fidelity.

In terms of biological role, one of the primary rRNA binding proteins, it binds directly to 16S rRNA where it nucleates assembly of the body of the 30S subunit. Functionally, with S5 and S12 plays an important role in translational accuracy. This chain is Small ribosomal subunit protein uS4, found in Dichelobacter nodosus (strain VCS1703A).